Here is a 131-residue protein sequence, read N- to C-terminus: Small ribosomal subunit protein uS9c (131 aa).

This sequence belongs to the universal ribosomal protein uS9 family.

The protein localises to the plastid. Its subcellular location is the chloroplast. The polypeptide is Small ribosomal subunit protein uS9c (rps9) (Emiliania huxleyi (Coccolithophore)).